A 117-amino-acid chain; its full sequence is Ig heavy chain V region G4 (117 aa).

Positions 1 to 19 (MTHWLCFTLALVAVRGVLS) are cleaved as a signal peptide. Residues 20-49 (EIQLVESGGAIRKPGDSLRLSCKASGFTFS) are framework-1. Cys-41 and Cys-115 are disulfide-bonded. The segment at 50-54 (DTWMA) is complementarity-determining-1. Residues 55–68 (WARQPPGKGLQWVG) form a framework-2 region. Residues 69–85 (EINGNSETIRYAPEVKG) are complementarity-determining-2. The tract at residues 86-117 (RLTISRDNTQNLLFLQISSLKPEDTATYYCAR) is framework-3.

This is Ig heavy chain V region G4 (G4) from Caiman crocodilus (Spectacled caiman).